A 512-amino-acid chain; its full sequence is Spermatocyte protein spe-8 (512 aa).

Positions Met-1–Ser-85 are disordered. The span at Thr-15 to Ala-41 shows a compositional bias: basic and acidic residues. Residues Glu-68–Pro-78 show a composition bias toward pro residues. Positions Phe-114–Leu-205 constitute an SH2 domain. Positions Val-217–Glu-485 constitute a Protein kinase domain. ATP is bound by residues Leu-223–Val-231 and Lys-250. Asp-344 (proton acceptor) is an active-site residue.

The protein belongs to the protein kinase superfamily. Tyr protein kinase family. Fes/fps subfamily. As to expression, expression is restricted to male germline.

It is found in the cell membrane. It localises to the cytoplasm. The catalysed reaction is L-tyrosyl-[protein] + ATP = O-phospho-L-tyrosyl-[protein] + ADP + H(+). Its function is as follows. Probable non-receptor tyrosine-protein kinase which plays a role in spermatid activation (spermiogenesis) in hermaphrodites. The protein is Spermatocyte protein spe-8 of Caenorhabditis elegans.